Here is a 493-residue protein sequence, read N- to C-terminus: Glycogen synthase 1 (493 aa).

Lys-15 provides a ligand contact to ADP-alpha-D-glucose.

The protein belongs to the glycosyltransferase 1 family. Bacterial/plant glycogen synthase subfamily.

The catalysed reaction is [(1-&gt;4)-alpha-D-glucosyl](n) + ADP-alpha-D-glucose = [(1-&gt;4)-alpha-D-glucosyl](n+1) + ADP + H(+). It participates in glycan biosynthesis; glycogen biosynthesis. Functionally, synthesizes alpha-1,4-glucan chains using ADP-glucose. The sequence is that of Glycogen synthase 1 from Methylococcus capsulatus (strain ATCC 33009 / NCIMB 11132 / Bath).